We begin with the raw amino-acid sequence, 101 residues long: Integration host factor subunit beta (101 aa).

Residues 57–77 (PARAGRNPRTGAHVPVDQKSV) are disordered.

The protein belongs to the bacterial histone-like protein family. Heterodimer of an alpha and a beta chain.

This protein is one of the two subunits of integration host factor, a specific DNA-binding protein that functions in genetic recombination as well as in transcriptional and translational control. The protein is Integration host factor subunit beta of Rhodopseudomonas palustris (strain HaA2).